Consider the following 837-residue polypeptide: Protein translocase subunit SecA (837 aa).

Residues Gln85, 103–107, and Asp493 each bind ATP; that span reads GEGKT. 4 residues coordinate Zn(2+): Cys821, Cys823, Cys832, and His833.

The protein belongs to the SecA family. As to quaternary structure, monomer and homodimer. Part of the essential Sec protein translocation apparatus which comprises SecA, SecYEG and auxiliary proteins SecDF. Other proteins may also be involved. It depends on Zn(2+) as a cofactor.

It is found in the cell membrane. Its subcellular location is the cytoplasm. The enzyme catalyses ATP + H2O + cellular proteinSide 1 = ADP + phosphate + cellular proteinSide 2.. In terms of biological role, part of the Sec protein translocase complex. Interacts with the SecYEG preprotein conducting channel. Has a central role in coupling the hydrolysis of ATP to the transfer of proteins into and across the cell membrane, serving as an ATP-driven molecular motor driving the stepwise translocation of polypeptide chains across the membrane. The protein is Protein translocase subunit SecA of Streptococcus pneumoniae (strain Taiwan19F-14).